A 194-amino-acid polypeptide reads, in one-letter code: tRNA (guanine-N(1)-)-methyltransferase (194 aa).

S-adenosyl-L-methionine-binding positions include G78 and 97-102 (IGDYVL).

This sequence belongs to the RNA methyltransferase TrmD family. As to quaternary structure, homodimer.

Its subcellular location is the cytoplasm. The enzyme catalyses guanosine(37) in tRNA + S-adenosyl-L-methionine = N(1)-methylguanosine(37) in tRNA + S-adenosyl-L-homocysteine + H(+). Specifically methylates guanosine-37 in various tRNAs. In Mycoplasma mobile (strain ATCC 43663 / 163K / NCTC 11711) (Mesomycoplasma mobile), this protein is tRNA (guanine-N(1)-)-methyltransferase.